The following is a 489-amino-acid chain: Endoglucanase 4 (489 aa).

A signal peptide spans 1–25 (MAGKSFMTPAIMLAMLLLISPETYA). Catalysis depends on aspartate 81, which acts as the Nucleophile. Histidine 409 is an active-site residue. An N-linked (GlcNAc...) asparagine glycan is attached at asparagine 453. Catalysis depends on residues aspartate 460 and glutamate 469.

The protein belongs to the glycosyl hydrolase 9 (cellulase E) family.

It localises to the secreted. It catalyses the reaction Endohydrolysis of (1-&gt;4)-beta-D-glucosidic linkages in cellulose, lichenin and cereal beta-D-glucans.. This chain is Endoglucanase 4, found in Arabidopsis thaliana (Mouse-ear cress).